The primary structure comprises 343 residues: Ribosomal RNA small subunit methyltransferase C (343 aa).

Belongs to the methyltransferase superfamily. RsmC family. As to quaternary structure, monomer.

Its subcellular location is the cytoplasm. The enzyme catalyses guanosine(1207) in 16S rRNA + S-adenosyl-L-methionine = N(2)-methylguanosine(1207) in 16S rRNA + S-adenosyl-L-homocysteine + H(+). Functionally, specifically methylates the guanine in position 1207 of 16S rRNA in the 30S particle. This Pseudoalteromonas atlantica (strain T6c / ATCC BAA-1087) protein is Ribosomal RNA small subunit methyltransferase C.